The following is a 962-amino-acid chain: UPF0182 protein SACE_1102 (962 aa).

7 helical membrane-spanning segments follow: residues 10–30, 55–75, 106–126, 168–188, 203–223, 250–270, and 279–299; these read ILLI…RLLG, LGLG…NLWI, LFGW…AQSD, FVAI…FGGI, IQLS…YFLD, VKLI…AAIF, and IATV…PALL. Disordered regions lie at residues 707–730 and 876–916; these read RTFW…GNQQ and FGPG…EMTK. Residues 899–910 show a composition bias toward pro residues; sequence GQQPPTQQPPAG.

Belongs to the UPF0182 family.

It localises to the cell membrane. This is UPF0182 protein SACE_1102 from Saccharopolyspora erythraea (strain ATCC 11635 / DSM 40517 / JCM 4748 / NBRC 13426 / NCIMB 8594 / NRRL 2338).